A 795-amino-acid chain; its full sequence is RalBP1-associated Eps domain-containing protein 1 (795 aa).

The EH 1 domain maps to 10–113 (EQKYYSDLFS…SKNEQESRLA (104 aa)). Residues 112 to 238 (LAASYSSDSE…NWVSFADTPP (127 aa)) are disordered. Positions 115-126 (SYSSDSENQGSY) are enriched in polar residues. 4 positions are modified to phosphoserine: serine 145, serine 162, serine 166, and serine 170. Low complexity predominate over residues 156 to 168 (EQQEPVSPVVSPQ). A Phosphothreonine modification is found at threonine 173. Positions 205-216 (GDAQAGSSAGDA) are enriched in low complexity. Residues serine 272 and serine 273 each carry the phosphoserine modification. Residues 285–374 (QRQYYVNQFK…ESLMPKLIDL (90 aa)) form the EH 2 domain. Tyrosine 288 carries the phosphotyrosine modification. Serine 307 is subject to Phosphoserine. The 36-residue stretch at 318-353 (LPILELSHIWELSDFDKDGALTLDEFCAAFHLVVAR) folds into the EF-hand domain. Residues aspartate 331, aspartate 333, aspartate 335, and glutamate 342 each coordinate Ca(2+). 2 disordered regions span residues 380–433 (VGEQ…SSQT) and 469–720 (ELKR…DEHT). A compositionally biased stretch (polar residues) spans 407-433 (LNQTWPELNQSSEQWETFSERSSSSQT). A phosphoserine mark is found at serine 475, serine 482, and serine 489. 2 stretches are compositionally biased toward polar residues: residues 497 to 518 (INSS…SDSF) and 525 to 542 (IGSS…SPDN). Serine 539 carries the post-translational modification Phosphoserine. At threonine 543 the chain carries Phosphothreonine. The span at 543 to 553 (TAPPPPPPRPQ) shows a compositional bias: pro residues. Residue serine 561 is modified to Phosphoserine. The span at 562 to 573 (LDMNRTFAVTTG) shows a compositional bias: polar residues. Residues 574–583 (QQQAGVVAHP) are compositionally biased toward low complexity. The segment covering 584-595 (PAVPPRPQPSQA) has biased composition (pro residues). Polar residues-rich tracts occupy residues 611-622 (THTSTSPQQIPE) and 681-692 (ATNVPANVSKGT). Positions 651 to 795 (HPEVLPAEKA…LEQLRPFSHL (145 aa)) are interaction with RALBP1. Basic and acidic residues predominate over residues 707–720 (KSEDELRPDVDEHT). Phosphoserine occurs at positions 708 and 739. The stretch at 750 to 790 (SIRRNKETNTVLARLNSELQQQLKDVLEERISLEVQLEQLR) forms a coiled coil.

As to quaternary structure, homodimer (Potential). Interacts with RALBP1, CRK and GRB2. Binding to RALBP1 does not affect its Ral-binding activity. Forms a complex with the SH3 domains of CRK and GRB2 which may link it to an EGF-responsive tyrosine kinase. Interacts with RAB11FIP2. Interacts with AMPH, ITSN1 (via SH3 domains) and SGIP1; may be involved in clathrin-mediated endocytosis. Post-translationally, EGF stimulates phosphorylation on Tyr-residues. As to expression, expressed in all tissues examined. The highest level expression was found in the kidney and testis.

It is found in the membrane. The protein localises to the clathrin-coated pit. May coordinate the cellular actions of activated EGF receptors and Ral-GTPases. The chain is RalBP1-associated Eps domain-containing protein 1 (Reps1) from Mus musculus (Mouse).